A 367-amino-acid chain; its full sequence is Leucine-rich repeat-containing protein 28 (367 aa).

LRR repeat units follow at residues 16-36, 42-63, 66-87, 89-111, 112-133, 135-156, 158-180, 181-202, and 204-226; these read KHKNLFLNYRNLHHFPLELLK, HLERLYMKRNSLTTLPENLAQK, NLVELYLHSNNIVVVPEAIGSL, KLQCLDLSDNALEIVCPEIGGLR, ALRHLRLANNQLQFLPPEVGDL, ELQTLDISSNRLLALPERLHLC, SLQYLTVDRNRLCCVPRHLCQLP, SLNELSMAGNHLASLPIDLGRS, and ELQYVYVDNNIQLKGLPSYLYNK.

This is Leucine-rich repeat-containing protein 28 (Lrrc28) from Mus musculus (Mouse).